The primary structure comprises 457 residues: Oxygen-independent coproporphyrinogen III oxidase (457 aa).

A Radical SAM core domain is found at 47–280 (RYPERPLSLY…QETIVSLTQA (234 aa)). Residue Y56 coordinates S-adenosyl-L-methionine. [4Fe-4S] cluster contacts are provided by C62 and C66. F68 provides a ligand contact to S-adenosyl-L-methionine. A [4Fe-4S] cluster-binding site is contributed by C69. Residues G112, 113–114 (GT), E145, Q172, R184, D209, A243, and I329 each bind S-adenosyl-L-methionine.

This sequence belongs to the anaerobic coproporphyrinogen-III oxidase family. As to quaternary structure, monomer. [4Fe-4S] cluster serves as cofactor.

The protein localises to the cytoplasm. It carries out the reaction coproporphyrinogen III + 2 S-adenosyl-L-methionine = protoporphyrinogen IX + 2 5'-deoxyadenosine + 2 L-methionine + 2 CO2. The protein operates within porphyrin-containing compound metabolism; protoporphyrin-IX biosynthesis; protoporphyrinogen-IX from coproporphyrinogen-III (AdoMet route): step 1/1. Involved in the heme biosynthesis. Catalyzes the anaerobic oxidative decarboxylation of propionate groups of rings A and B of coproporphyrinogen III to yield the vinyl groups in protoporphyrinogen IX. This chain is Oxygen-independent coproporphyrinogen III oxidase (hemN), found in Salmonella typhi.